The primary structure comprises 318 residues: Carbamate kinase (318 aa).

The protein belongs to the carbamate kinase family.

It localises to the cytoplasm. It catalyses the reaction hydrogencarbonate + NH4(+) + ATP = carbamoyl phosphate + ADP + H2O + H(+). It functions in the pathway metabolic intermediate metabolism; carbamoyl phosphate degradation; CO(2) and NH(3) from carbamoyl phosphate: step 1/1. This is Carbamate kinase (arcC) from Lentilactobacillus hilgardii (Lactobacillus hilgardii).